An 876-amino-acid chain; its full sequence is Leucine--tRNA ligase (876 aa).

Positions 43–53 (PYPSGRIHMGH) match the 'HIGH' region motif. Residues 632–636 (KMSKS) carry the 'KMSKS' region motif. Residue Lys635 coordinates ATP.

Belongs to the class-I aminoacyl-tRNA synthetase family.

Its subcellular location is the cytoplasm. The catalysed reaction is tRNA(Leu) + L-leucine + ATP = L-leucyl-tRNA(Leu) + AMP + diphosphate. The protein is Leucine--tRNA ligase of Rhodopseudomonas palustris (strain TIE-1).